The following is a 127-amino-acid chain: Mu-like prophage FluMu protein gp41 (127 aa).

The segment at valine 107–serine 127 is disordered. Over residues glycine 110–lysine 121 the composition is skewed to basic and acidic residues.

This sequence to phage Mu protein gp41.

The protein is Mu-like prophage FluMu protein gp41 of Haemophilus influenzae (strain ATCC 51907 / DSM 11121 / KW20 / Rd).